Reading from the N-terminus, the 463-residue chain is Adenylosuccinate synthetase, chloroplastic (463 aa).

GTP contacts are provided by residues 44-50 (GDEGKGK) and 72-74 (GHT). Catalysis depends on D45, which acts as the Proton acceptor. Residues D45 and G72 each coordinate Mg(2+). Residues 45 to 48 (DEGK), 70 to 73 (NAGH), T164, R178, N256, T271, and R335 contribute to the IMP site. H73 serves as the catalytic Proton donor. 331–337 (TTTGRPR) is a binding site for substrate. GTP is bound by residues R337, 363–365 (KLD), and 446–448 (GVG).

This sequence belongs to the adenylosuccinate synthetase family. Homodimer. It depends on Mg(2+) as a cofactor.

It is found in the plastid. It localises to the chloroplast. The enzyme catalyses IMP + L-aspartate + GTP = N(6)-(1,2-dicarboxyethyl)-AMP + GDP + phosphate + 2 H(+). It functions in the pathway purine metabolism; AMP biosynthesis via de novo pathway; AMP from IMP: step 1/2. Its function is as follows. Plays an important role in the de novo pathway and in the salvage pathway of purine nucleotide biosynthesis. Catalyzes the first committed step in the biosynthesis of AMP from IMP. This is Adenylosuccinate synthetase, chloroplastic from Chlamydomonas reinhardtii (Chlamydomonas smithii).